A 461-amino-acid chain; its full sequence is Ufm1-specific protease 2 (461 aa).

Residues Cys294, Asp418, and His420 contribute to the active site.

It belongs to the peptidase C78 family. In terms of tissue distribution, expressed at high level in brain, kidney, stomach, skeletal muscle, liver, pancreas, spleen and testis.

The protein localises to the endoplasmic reticulum. Its subcellular location is the cytoplasm. The protein resides in the nucleus. In terms of biological role, thiol-dependent isopeptidase that specifically cleaves UFM1, a ubiquitin-like modifier protein, from conjugated proteins, such as CD274/PD-L1, CYB5R3, DDRGK1, MRE11, RPL26/uL24, TRIP4 and RPL26/uL24. While it is also able to mediate the processing of UFM1 precursors, a prerequisite for conjugation reactions, UFSP2 mainly acts as a protein deUFMylase that mediates deconjugation of UFM1 from target proteins. Mediates deUFMylation of RPL26/uL24, a critical step to release the UFM1 ribosome E3 ligase (UREL) complex during the recycling of 60S ribosome subunits from the endoplasmic reticulum. Catalyzes deUFMylation of TRIP4, regulating intracellular nuclear receptors transactivation and thereby regulate cell proliferation and differentiation. This chain is Ufm1-specific protease 2, found in Mus musculus (Mouse).